A 275-amino-acid polypeptide reads, in one-letter code: Dihydropteroate synthase (275 aa).

Residues 15-267 (PQIMGILNFT…DVAATSDMLK (253 aa)) enclose the Pterin-binding domain. Asparagine 22 contributes to the Mg(2+) binding site. Residues threonine 62, aspartate 96, asparagine 115, aspartate 185, lysine 221, and 255–257 (RVH) contribute to the (7,8-dihydropterin-6-yl)methyl diphosphate site.

This sequence belongs to the DHPS family. As to quaternary structure, homodimer. Requires Mg(2+) as cofactor.

It catalyses the reaction (7,8-dihydropterin-6-yl)methyl diphosphate + 4-aminobenzoate = 7,8-dihydropteroate + diphosphate. It functions in the pathway cofactor biosynthesis; tetrahydrofolate biosynthesis; 7,8-dihydrofolate from 2-amino-4-hydroxy-6-hydroxymethyl-7,8-dihydropteridine diphosphate and 4-aminobenzoate: step 1/2. In terms of biological role, catalyzes the condensation of para-aminobenzoate (pABA) with 6-hydroxymethyl-7,8-dihydropterin diphosphate (DHPt-PP) to form 7,8-dihydropteroate (H2Pte), the immediate precursor of folate derivatives. The chain is Dihydropteroate synthase (folP-A) from Haemophilus influenzae (strain ATCC 51907 / DSM 11121 / KW20 / Rd).